The chain runs to 210 residues: TM2 domain-containing protein C02F5.13 (210 aa).

The first 18 residues, 1–18 (MRRLPWLIPFFLVNISNG), serve as a signal peptide directing secretion. Residues 19–138 (NNEFRIEFEY…PRTFTKSTPC (120 aa)) lie on the Extracellular side of the membrane. Asn-91 carries N-linked (GlcNAc...) asparagine glycosylation. A helical transmembrane segment spans residues 139–159 (IIYNGHYFLTTLLYSIFLGVV). A TM2 domain is found at 143 to 191 (GHYFLTTLLYSIFLGVVAVDRFCLGYSAMAVGKLMTLGGFGIWWIVDIF). Topologically, residues 160–178 (AVDRFCLGYSAMAVGKLMT) are cytoplasmic. Residues 179 to 199 (LGGFGIWWIVDIFLLVLGVLG) form a helical membrane-spanning segment. Over 200–210 (PADDSSWEPYY) the chain is Extracellular.

It belongs to the TM2 family.

It localises to the membrane. The protein is TM2 domain-containing protein C02F5.13 of Caenorhabditis elegans.